Here is a 128-residue protein sequence, read N- to C-terminus: Flagellar basal body rod protein FlgB (128 aa).

Belongs to the flagella basal body rod proteins family. As to quaternary structure, the basal body constitutes a major portion of the flagellar organelle and consists of a number of rings mounted on a central rod. In Gram-negative bacteria, at least four rings, L, P, S and M are present, whereas Gram-positive bacteria lack the L and P rings. The rod consists of about 26 subunits of FlgG in the distal portion, and FlgB, FlgC and FlgF build up the proximal portion of the rod with about 6 subunits each. Rod assembly occurs by export via the flagellum-specific pathway of its constituent proteins and by their incorporation into the rod structure in the probable order of FlgB, FlgC, FlgF and FlgG. Another protein, FliE, also assembles onto the stable rod structure.

It localises to the bacterial flagellum basal body. Structural component of flagellum, the bacterial motility apparatus. Part of the rod structure of flagellar basal body. The polypeptide is Flagellar basal body rod protein FlgB (Cereibacter sphaeroides (strain ATCC 17023 / DSM 158 / JCM 6121 / CCUG 31486 / LMG 2827 / NBRC 12203 / NCIMB 8253 / ATH 2.4.1.) (Rhodobacter sphaeroides)).